Consider the following 862-residue polypeptide: Semaphorin-4D (862 aa).

The N-terminal stretch at 1–21 (MRMCTPIRGLLMALAVMFGTA) is a signal peptide. The Sema domain occupies 22 to 500 (MAFAPIPRIT…SNSGVVQAPL (479 aa)). The Extracellular portion of the chain corresponds to 22 to 734 (MAFAPIPRIT…TMYLKSSDNR (713 aa)). N-linked (GlcNAc...) asparagine glycosylation is found at Asn-49 and Asn-77. Cystine bridges form between Cys-97-Cys-108 and Cys-126-Cys-135. N-linked (GlcNAc...) asparagine glycans are attached at residues Asn-139 and Asn-191. 2 disulfides stabilise this stretch: Cys-257-Cys-370 and Cys-281-Cys-326. Residues Asn-329, Asn-379, and Asn-419 are each glycosylated (N-linked (GlcNAc...) asparagine). Residues 502-551 (FCGKHGTCEDCVLARDPYCAWSPPTATCVALHQTESPSRGLIQEMSGDAS) form the PSI domain. 4 disulfide bridges follow: Cys-503/Cys-520, Cys-509/Cys-553, Cys-512/Cys-529, and Cys-576/Cys-624. Positions 554–636 (PDKSKGSYRQ…EERVKNKTVF (83 aa)) constitute an Ig-like C2-type domain. N-linked (GlcNAc...) asparagine glycans are attached at residues Asn-613 and Asn-632. Residues 735-755 (LLMSLFLFFFVLFLCLFFYNC) traverse the membrane as a helical segment. Residues 756–862 (YKGYLPRQCL…KFADSDADGD (107 aa)) are Cytoplasmic-facing. The tract at residues 794–837 (VEPGSFSQQNGEHPKPALDTGYETEQDTITSKVPTDREDSQRID) is disordered. Residues 827–837 (PTDREDSQRID) are compositionally biased toward basic and acidic residues. Ser-833 carries the post-translational modification Phosphoserine.

It belongs to the semaphorin family. Homodimer. Interacts with PLXNB2. Interacts with PLXNB1. In terms of tissue distribution, strongly expressed in skeletal muscle, peripheral blood lymphocytes, spleen, and thymus and also expressed at lower levels in testes, brain, kidney, small intestine, prostate, heart, placenta, lung and pancreas, but not in colon and liver.

The protein resides in the cell membrane. In terms of biological role, cell surface receptor for PLXNB1 and PLXNB2 that plays an important role in cell-cell signaling. Regulates GABAergic synapse development. Promotes the development of inhibitory synapses in a PLXNB1-dependent manner. Modulates the complexity and arborization of developing neurites in hippocampal neurons by activating PLXNB1 and interaction with PLXNB1 mediates activation of RHOA. Promotes the migration of cerebellar granule cells. Plays a role in the immune system; induces B-cells to aggregate and improves their viability (in vitro). Induces endothelial cell migration through the activation of PTK2B/PYK2, SRC, and the phosphatidylinositol 3-kinase-AKT pathway. This Homo sapiens (Human) protein is Semaphorin-4D (SEMA4D).